A 394-amino-acid polypeptide reads, in one-letter code: Ribulose bisphosphate carboxylase large chain (394 aa).

Lys5 is modified (N6,N6,N6-trimethyllysine). Substrate is bound by residues Asn114 and Thr164. Lys166 acts as the Proton acceptor in catalysis. Lys168 serves as a coordination point for substrate. Positions 192, 194, and 195 each coordinate Mg(2+). The residue at position 192 (Lys192) is an N6-carboxylysine. The Proton acceptor role is filled by His285. The substrate site is built by Arg286, His318, and Ser370.

Belongs to the RuBisCO large chain family. Type I subfamily. Heterohexadecamer of 8 large chains and 8 small chains. Mg(2+) is required as a cofactor.

It localises to the plastid. The protein localises to the chloroplast. The catalysed reaction is 2 (2R)-3-phosphoglycerate + 2 H(+) = D-ribulose 1,5-bisphosphate + CO2 + H2O. The enzyme catalyses D-ribulose 1,5-bisphosphate + O2 = 2-phosphoglycolate + (2R)-3-phosphoglycerate + 2 H(+). Functionally, ruBisCO catalyzes two reactions: the carboxylation of D-ribulose 1,5-bisphosphate, the primary event in carbon dioxide fixation, as well as the oxidative fragmentation of the pentose substrate in the photorespiration process. Both reactions occur simultaneously and in competition at the same active site. The protein is Ribulose bisphosphate carboxylase large chain (rbcL) of Cabomba caroliniana (Carolina fanwort).